Reading from the N-terminus, the 330-residue chain is Global transcription regulator sge1 (330 aa).

Disordered regions lie at residues proline 93–valine 123 and glutamine 239–glutamine 306. Residues glycine 105–isoleucine 114 are compositionally biased toward polar residues. Residues glutamine 250–glutamine 306 are compositionally biased toward low complexity.

This sequence belongs to the MIT1/WOR1 family.

The protein localises to the nucleus. Functionally, global transcriptional regulator of pathogenicity. Acts as an activator of parasitic growth. Not essential for colonization or penetration of the root surface, but required for expression of genes encoding effectors that are secreted during infection. Involved in conidiogenesis, but is not required for conidial fitness, overall (colony) morphology, vegetative growth or carbon source utilization. This Fusarium oxysporum f. sp. lycopersici (strain 4287 / CBS 123668 / FGSC 9935 / NRRL 34936) (Fusarium vascular wilt of tomato) protein is Global transcription regulator sge1.